The sequence spans 78 residues: Large ribosomal subunit protein bL28 (78 aa).

It belongs to the bacterial ribosomal protein bL28 family.

The chain is Large ribosomal subunit protein bL28 from Synechococcus sp. (strain WH7803).